Reading from the N-terminus, the 163-residue chain is ATP synthase subunit b 1 (163 aa).

A helical membrane pass occupies residues 7 to 27 (AETWVAVAFVILMALFAYLGV).

It belongs to the ATPase B chain family. As to quaternary structure, F-type ATPases have 2 components, F(1) - the catalytic core - and F(0) - the membrane proton channel. F(1) has five subunits: alpha(3), beta(3), gamma(1), delta(1), epsilon(1). F(0) has three main subunits: a(1), b(2) and c(10-14). The alpha and beta chains form an alternating ring which encloses part of the gamma chain. F(1) is attached to F(0) by a central stalk formed by the gamma and epsilon chains, while a peripheral stalk is formed by the delta and b chains.

It localises to the cell inner membrane. Functionally, f(1)F(0) ATP synthase produces ATP from ADP in the presence of a proton or sodium gradient. F-type ATPases consist of two structural domains, F(1) containing the extramembraneous catalytic core and F(0) containing the membrane proton channel, linked together by a central stalk and a peripheral stalk. During catalysis, ATP synthesis in the catalytic domain of F(1) is coupled via a rotary mechanism of the central stalk subunits to proton translocation. Component of the F(0) channel, it forms part of the peripheral stalk, linking F(1) to F(0). This Rhodopseudomonas palustris (strain BisB5) protein is ATP synthase subunit b 1.